Here is a 520-residue protein sequence, read N- to C-terminus: Glucose-1-phosphate adenylyltransferase small subunit, chloroplastic (520 aa).

The N-terminal 71 residues, 1-71, are a transit peptide targeting the chloroplast; that stretch reads MASVSAIGVL…RNPIIVSPKA (71 aa).

The protein belongs to the bacterial/plant glucose-1-phosphate adenylyltransferase family. Heterotetramer. As to expression, leaves.

Its subcellular location is the plastid. The protein localises to the chloroplast. The enzyme catalyses alpha-D-glucose 1-phosphate + ATP + H(+) = ADP-alpha-D-glucose + diphosphate. It functions in the pathway glycan biosynthesis; starch biosynthesis. With respect to regulation, activated by 3'phosphoglycerate, inhibited by orthophosphate. Allosteric regulation. Functionally, this protein plays a role in synthesis of starch. It catalyzes the synthesis of the activated glycosyl donor, ADP-glucose from Glc-1-P and ATP. In Arabidopsis thaliana (Mouse-ear cress), this protein is Glucose-1-phosphate adenylyltransferase small subunit, chloroplastic (APS1).